We begin with the raw amino-acid sequence, 119 residues long: Large ribosomal subunit protein bL20 (119 aa).

The protein belongs to the bacterial ribosomal protein bL20 family.

Functionally, binds directly to 23S ribosomal RNA and is necessary for the in vitro assembly process of the 50S ribosomal subunit. It is not involved in the protein synthesizing functions of that subunit. The sequence is that of Large ribosomal subunit protein bL20 from Bradyrhizobium sp. (strain ORS 278).